The chain runs to 118 residues: Ribonuclease P protein component (118 aa).

This sequence belongs to the RnpA family. In terms of assembly, consists of a catalytic RNA component (M1 or rnpB) and a protein subunit.

The catalysed reaction is Endonucleolytic cleavage of RNA, removing 5'-extranucleotides from tRNA precursor.. RNaseP catalyzes the removal of the 5'-leader sequence from pre-tRNA to produce the mature 5'-terminus. It can also cleave other RNA substrates such as 4.5S RNA. The protein component plays an auxiliary but essential role in vivo by binding to the 5'-leader sequence and broadening the substrate specificity of the ribozyme. The polypeptide is Ribonuclease P protein component (Shewanella amazonensis (strain ATCC BAA-1098 / SB2B)).